Consider the following 371-residue polypeptide: MSSIFKEGIYDTGSYARTGTLDLNGIQIQTPIFMPVGTRGSIKSLTSEDIDELGYNLILANTYHLYLKPGKEVFDHFQGLKNFMSYKKALLTDSGGFQVFSLASLFKFEDDGVRFQSHIDGSHHKFTPASVIDMQRSIGSDIMMVLDDCAPYGSDTKRLELALDRTHRWAKESFAYWMENPGGQNVFPIVQGGVNETLRLRSLETLQKIDFPGIAIGGLSVGEPRPEYIRILECMAPHLDKSRPRYLMGVGTVVDILEGVKNGIDMFDCVLPTRNARNGQVFTSKGKINLRNESHRLSDSPIDPQCECKVCKTYSLGYIRHLHKVKELTAFSLSTYHNLFFMQSFMEKMRKSIEIGNFQGFYDHWKNLFGS.

Asp-93 (proton acceptor) is an active-site residue. Substrate is bound by residues 93-97, Asp-147, Gln-191, and Gly-218; that span reads DSGGF. Positions 249 to 255 are RNA binding; it reads GVGTVVD. Residue Asp-268 is the Nucleophile of the active site. The RNA binding; important for wobble base 34 recognition stretch occupies residues 273 to 277; the sequence is TRNAR. Residues Cys-306, Cys-308, Cys-311, and His-337 each coordinate Zn(2+).

Belongs to the queuine tRNA-ribosyltransferase family. As to quaternary structure, homodimer. Within each dimer, one monomer is responsible for RNA recognition and catalysis, while the other monomer binds to the replacement base PreQ1. Zn(2+) serves as cofactor.

The enzyme catalyses 7-aminomethyl-7-carbaguanine + guanosine(34) in tRNA = 7-aminomethyl-7-carbaguanosine(34) in tRNA + guanine. The protein operates within tRNA modification; tRNA-queuosine biosynthesis. Its function is as follows. Catalyzes the base-exchange of a guanine (G) residue with the queuine precursor 7-aminomethyl-7-deazaguanine (PreQ1) at position 34 (anticodon wobble position) in tRNAs with GU(N) anticodons (tRNA-Asp, -Asn, -His and -Tyr). Catalysis occurs through a double-displacement mechanism. The nucleophile active site attacks the C1' of nucleotide 34 to detach the guanine base from the RNA, forming a covalent enzyme-RNA intermediate. The proton acceptor active site deprotonates the incoming PreQ1, allowing a nucleophilic attack on the C1' of the ribose to form the product. After dissociation, two additional enzymatic reactions on the tRNA convert PreQ1 to queuine (Q), resulting in the hypermodified nucleoside queuosine (7-(((4,5-cis-dihydroxy-2-cyclopenten-1-yl)amino)methyl)-7-deazaguanosine). The chain is Queuine tRNA-ribosyltransferase from Leptospira biflexa serovar Patoc (strain Patoc 1 / Ames).